The sequence spans 207 residues: 8-oxoguanine DNA glycosylase/AP lyase (207 aa).

Residues lysine 128 and aspartate 146 contribute to the active site.

Belongs to the type-2 OGG1 family.

It catalyses the reaction 2'-deoxyribonucleotide-(2'-deoxyribose 5'-phosphate)-2'-deoxyribonucleotide-DNA = a 3'-end 2'-deoxyribonucleotide-(2,3-dehydro-2,3-deoxyribose 5'-phosphate)-DNA + a 5'-end 5'-phospho-2'-deoxyribonucleoside-DNA + H(+). Functionally, catalyzes the excision of an oxidatively damaged form of guanine (7,8-dihydro-8-oxoguanine = 8-oxoG) from DNA. Also cleaves the DNA backbone at apurinic/apyrimidinic sites (AP sites). The chain is 8-oxoguanine DNA glycosylase/AP lyase from Saccharolobus solfataricus (strain ATCC 35092 / DSM 1617 / JCM 11322 / P2) (Sulfolobus solfataricus).